The sequence spans 877 residues: Alanine--tRNA ligase (877 aa).

Residues histidine 567, histidine 571, cysteine 669, and histidine 673 each contribute to the Zn(2+) site.

It belongs to the class-II aminoacyl-tRNA synthetase family. Zn(2+) is required as a cofactor.

The protein resides in the cytoplasm. The enzyme catalyses tRNA(Ala) + L-alanine + ATP = L-alanyl-tRNA(Ala) + AMP + diphosphate. In terms of biological role, catalyzes the attachment of alanine to tRNA(Ala) in a two-step reaction: alanine is first activated by ATP to form Ala-AMP and then transferred to the acceptor end of tRNA(Ala). Also edits incorrectly charged Ser-tRNA(Ala) and Gly-tRNA(Ala) via its editing domain. This is Alanine--tRNA ligase from Rickettsia typhi (strain ATCC VR-144 / Wilmington).